The following is a 634-amino-acid chain: tRNA uridine 5-carboxymethylaminomethyl modification enzyme MnmG (634 aa).

Position 14 to 19 (14 to 19) interacts with FAD; it reads GGGHAG. NAD(+) is bound at residue 279 to 293; it reads GPRYCPSIEDKVVRF.

This sequence belongs to the MnmG family. Homodimer. Heterotetramer of two MnmE and two MnmG subunits. FAD serves as cofactor.

Its subcellular location is the cytoplasm. In terms of biological role, NAD-binding protein involved in the addition of a carboxymethylaminomethyl (cmnm) group at the wobble position (U34) of certain tRNAs, forming tRNA-cmnm(5)s(2)U34. This is tRNA uridine 5-carboxymethylaminomethyl modification enzyme MnmG from Xanthomonas campestris pv. campestris (strain 8004).